The following is a 231-amino-acid chain: Phosphatidate cytidylyltransferase (231 aa).

The next 6 membrane-spanning stretches (helical) occupy residues 33–53 (FVVA…LVAI), 67–87 (IMYL…LIFL), 95–115 (WLIM…MIGG), 133–153 (WSGL…ISFI), 167–187 (IYLF…DLFI), and 206–226 (HGGV…LFFI).

This sequence belongs to the CDS family.

It localises to the cell membrane. It catalyses the reaction a 1,2-diacyl-sn-glycero-3-phosphate + CTP + H(+) = a CDP-1,2-diacyl-sn-glycerol + diphosphate. The protein operates within phospholipid metabolism; CDP-diacylglycerol biosynthesis; CDP-diacylglycerol from sn-glycerol 3-phosphate: step 3/3. This chain is Phosphatidate cytidylyltransferase (cdsA), found in Rickettsia bellii (strain RML369-C).